We begin with the raw amino-acid sequence, 316 residues long: Probable cell division protein WhiA (316 aa).

A DNA-binding region (H-T-H motif) is located at residues 277 to 310 (SLEQLGRLADPPITKDAIAGRIRRLLQLAEKTEK).

Belongs to the WhiA family.

Involved in cell division and chromosome segregation. The sequence is that of Probable cell division protein WhiA from Bifidobacterium adolescentis (strain ATCC 15703 / DSM 20083 / NCTC 11814 / E194a).